Consider the following 277-residue polypeptide: Phosphate import ATP-binding protein PstB 2 (277 aa).

One can recognise an ABC transporter domain in the interval 31–272 (IEVPGLNLFY…PAKKQTEDYI (242 aa)). 63 to 70 (GPSGCGKS) contacts ATP.

This sequence belongs to the ABC transporter superfamily. Phosphate importer (TC 3.A.1.7) family. In terms of assembly, the complex is composed of two ATP-binding proteins (PstB), two transmembrane proteins (PstC and PstA) and a solute-binding protein (PstS).

It localises to the cell inner membrane. It carries out the reaction phosphate(out) + ATP + H2O = ADP + 2 phosphate(in) + H(+). Functionally, part of the ABC transporter complex PstSACB involved in phosphate import. Responsible for energy coupling to the transport system. The polypeptide is Phosphate import ATP-binding protein PstB 2 (Pseudomonas savastanoi pv. phaseolicola (strain 1448A / Race 6) (Pseudomonas syringae pv. phaseolicola (strain 1448A / Race 6))).